A 75-amino-acid polypeptide reads, in one-letter code: DNA-directed RNA polymerase subunit Rpo5 (75 aa).

The protein belongs to the archaeal Rpo5/eukaryotic RPB5 RNA polymerase subunit family. In terms of assembly, part of the RNA polymerase complex.

The protein localises to the cytoplasm. It catalyses the reaction RNA(n) + a ribonucleoside 5'-triphosphate = RNA(n+1) + diphosphate. In terms of biological role, DNA-dependent RNA polymerase (RNAP) catalyzes the transcription of DNA into RNA using the four ribonucleoside triphosphates as substrates. In Pyrobaculum aerophilum (strain ATCC 51768 / DSM 7523 / JCM 9630 / CIP 104966 / NBRC 100827 / IM2), this protein is DNA-directed RNA polymerase subunit Rpo5.